A 463-amino-acid polypeptide reads, in one-letter code: L-seryl-tRNA(Sec) selenium transferase (463 aa).

Lys295 is modified (N6-(pyridoxal phosphate)lysine).

Belongs to the SelA family. As to quaternary structure, homodecamer; pentamer of dimers. Binds only one seryl-tRNA(Sec) per dimer. Pyridoxal 5'-phosphate serves as cofactor.

The protein resides in the cytoplasm. The enzyme catalyses L-seryl-tRNA(Sec) + selenophosphate + H(+) = L-selenocysteinyl-tRNA(Sec) + phosphate. It participates in aminoacyl-tRNA biosynthesis; selenocysteinyl-tRNA(Sec) biosynthesis; selenocysteinyl-tRNA(Sec) from L-seryl-tRNA(Sec) (bacterial route): step 1/1. Its function is as follows. Converts seryl-tRNA(Sec) to selenocysteinyl-tRNA(Sec) required for selenoprotein biosynthesis. This chain is L-seryl-tRNA(Sec) selenium transferase, found in Salmonella paratyphi B (strain ATCC BAA-1250 / SPB7).